The primary structure comprises 554 residues: DNA ligase (554 aa).

ATP is bound at residue Glu-253. The active-site N6-AMP-lysine intermediate is Lys-255. Residues Arg-260, Arg-275, Glu-304, Phe-344, Arg-418, and Lys-424 each coordinate ATP.

It belongs to the ATP-dependent DNA ligase family. Requires Mg(2+) as cofactor.

The catalysed reaction is ATP + (deoxyribonucleotide)n-3'-hydroxyl + 5'-phospho-(deoxyribonucleotide)m = (deoxyribonucleotide)n+m + AMP + diphosphate.. In terms of biological role, DNA ligase that seals nicks in double-stranded DNA during DNA replication, DNA recombination and DNA repair. The protein is DNA ligase of Haloarcula marismortui (strain ATCC 43049 / DSM 3752 / JCM 8966 / VKM B-1809) (Halobacterium marismortui).